We begin with the raw amino-acid sequence, 272 residues long: Acetyl-coenzyme A carboxylase carboxyl transferase subunit alpha (272 aa).

Residues 1 to 248 form the CoA carboxyltransferase C-terminal domain; sequence MDKDFMKINV…KKTIVDSLLE (248 aa).

This sequence belongs to the AccA family. Acetyl-CoA carboxylase is a heterohexamer composed of biotin carboxyl carrier protein (AccB), biotin carboxylase (AccC) and two subunits each of ACCase subunit alpha (AccA) and ACCase subunit beta (AccD).

The protein resides in the cytoplasm. It catalyses the reaction N(6)-carboxybiotinyl-L-lysyl-[protein] + acetyl-CoA = N(6)-biotinyl-L-lysyl-[protein] + malonyl-CoA. The protein operates within lipid metabolism; malonyl-CoA biosynthesis; malonyl-CoA from acetyl-CoA: step 1/1. Its function is as follows. Component of the acetyl coenzyme A carboxylase (ACC) complex. First, biotin carboxylase catalyzes the carboxylation of biotin on its carrier protein (BCCP) and then the CO(2) group is transferred by the carboxyltransferase to acetyl-CoA to form malonyl-CoA. The protein is Acetyl-coenzyme A carboxylase carboxyl transferase subunit alpha of Clostridium beijerinckii (strain ATCC 51743 / NCIMB 8052) (Clostridium acetobutylicum).